A 338-amino-acid chain; its full sequence is Formamidase (338 aa).

A CN hydrolase domain is found at 14 to 260 (LLIAAIQYPV…WEIVTAELFP (247 aa)). E60 acts as the Proton acceptor in catalysis. K133 serves as the catalytic Proton donor. The active-site Nucleophile is the C166.

This sequence belongs to the carbon-nitrogen hydrolase superfamily. Aliphatic amidase family.

It carries out the reaction formamide + H2O = formate + NH4(+). Functionally, is an aliphatic amidase with a restricted substrate specificity, as it only hydrolyzes formamide. The polypeptide is Formamidase (Photorhabdus laumondii subsp. laumondii (strain DSM 15139 / CIP 105565 / TT01) (Photorhabdus luminescens subsp. laumondii)).